Reading from the N-terminus, the 214-residue chain is GTP cyclohydrolase 1 (214 aa).

Positions 108, 111, and 179 each coordinate Zn(2+).

It belongs to the GTP cyclohydrolase I family. Toroid-shaped homodecamer, composed of two pentamers of five dimers.

It carries out the reaction GTP + H2O = 7,8-dihydroneopterin 3'-triphosphate + formate + H(+). The protein operates within cofactor biosynthesis; 7,8-dihydroneopterin triphosphate biosynthesis; 7,8-dihydroneopterin triphosphate from GTP: step 1/1. This is GTP cyclohydrolase 1 from Shewanella loihica (strain ATCC BAA-1088 / PV-4).